Consider the following 404-residue polypeptide: Argininosuccinate synthase (404 aa).

ATP-binding positions include 12-20 (AYSGGLDTS) and Ala39. The L-citrulline site is built by Tyr91 and Ser96. Residue Gly121 coordinates ATP. L-aspartate-binding residues include Thr123, Asn127, and Asp128. Residue Asn127 coordinates L-citrulline. L-citrulline is bound by residues Arg131, Ser180, Ser189, Glu265, and Tyr277.

This sequence belongs to the argininosuccinate synthase family. Type 1 subfamily. As to quaternary structure, homotetramer.

The protein resides in the cytoplasm. The catalysed reaction is L-citrulline + L-aspartate + ATP = 2-(N(omega)-L-arginino)succinate + AMP + diphosphate + H(+). It functions in the pathway amino-acid biosynthesis; L-arginine biosynthesis; L-arginine from L-ornithine and carbamoyl phosphate: step 2/3. In Vibrio cholerae serotype O1 (strain ATCC 39541 / Classical Ogawa 395 / O395), this protein is Argininosuccinate synthase.